The primary structure comprises 131 residues: MAKYEPKKGDYAGGAVKILDMFENGQLGYPEVTLKLAGEEANARRAGDERTKEAIHAIVKMISDAMKPYRNKGSGFQSQPIPGEVIAQVTSNPEYQQAKAFLASPATQVRNIEREEVLSKGAKKLAQAMAS.

The protein belongs to the viral ORF131/RIP family.

The protein localises to the virion. The sequence is that of Structural protein ORF131 from Acidianus convivator (ATV).